A 777-amino-acid polypeptide reads, in one-letter code: MLARAERPRPGPRPPPVSLFPPPSSLLLLLLAMLSAPVCGRVPRSVPRTSLPISEADSYLTRFAAPHTYNYSALLVDPASHTLYVGARDSIFALTLPFSGEKPRRIDWMVPETHRQNCRKKGKKEDECHNFIQILAIANASHLLTCGTFAFDPKCGVIDVSSFQQVERLESGRGKCPFEPAQRSAAVMAGGVLYTATVKNFLGTEPIISRAVGRAEDWIRTETLSSWLNAPAFVAAMVLSPAEWGDEDGDDEIFFFFTETSRVLDSYERIKVPRVARVCAGDLGGRKTLQQRWTTFLKADLLCPGPEHGRASGVLQDMTELRPQPGAGTPLFYGIFSSQWEGAAISAVCAFRPQDIRAVLNGPFRELKHDCNRGLPVMDNEVPQPRPGECITNNMKFQQFGSSLSLPDRVLTFIRDHPLMDRPVFPADGRPLLVTTDTAYLRVVAHRVTSLSGKEYDVLYLGTEDGHLHRAVRIGAQLSVLEDLALFPETQPVESMKLYHDWLLVGSHTEVTQVNTSNCGRLQSCSECILAQDPVCAWSFRLDACVAHAGEHRGMVQDIESADVSSLCPKEPGEHPVVFEVPVATVGHVVLPCSPSSAWASCVWHQPSGVTSLTPRRDGLEVVVTPGAMGAYACECQEGGAARVVAAYSLVWGSQRGPANRAHTVVGAGLVGFFLGVLAASLTLLLIGRRQQRRRQRELLARDKVGLDLGAPPSGTTSYSQDPPSPSPEDERLPLALGKRGSGFGGFPPPFLLDSCPSPAHIRLTGAPLATCDETSI.

The N-terminal stretch at methionine 1 to glycine 40 is a signal peptide. Topologically, residues arginine 41–glycine 667 are extracellular. The region spanning arginine 48–threonine 516 is the Sema domain. An N-linked (GlcNAc...) asparagine glycan is attached at asparagine 70. A disulfide bridge connects residues cysteine 118 and cysteine 128. Asparagine 139 carries an N-linked (GlcNAc...) asparagine glycan. Intrachain disulfides connect cysteine 146-cysteine 155, cysteine 279-cysteine 390, and cysteine 303-cysteine 349. Asparagine 515 carries N-linked (GlcNAc...) asparagine glycosylation. A PSI domain is found at asparagine 518–proline 569. 3 disulfides stabilise this stretch: cysteine 519–cysteine 536, cysteine 528–cysteine 545, and cysteine 593–cysteine 634. The Ig-like C2-type domain maps to valine 586 to alanine 641. The chain crosses the membrane as a helical span at residues alanine 668–glycine 688. The Cytoplasmic portion of the chain corresponds to arginine 689 to isoleucine 777. The interval aspartate 703–serine 742 is disordered. 2 positions are modified to phosphoserine: serine 725 and serine 727. The short motif at threonine 775–isoleucine 777 is the PDZ-binding element.

It belongs to the semaphorin family. In terms of assembly, interacts (via PDZ-binding motif) with DLG4/SAP90 (via PDZ domain 2); this interaction may promote translocation of DLG4/SAP90 to the membrane. As to expression, expressed throughout the adult brain, where it shows particularly strong expression in the hippocampus, corpus callosum, granular layer and deep nuclei of the cerebellum, and the mitral layer of the olfactory bulb (at protein level). At the cellular level, detected in neuronal precursors, postmitotic neurons, pyramidal neurons, and glial cells including mature oligodendocytes and oligodendroglial precursor cells (at protein level).

Its subcellular location is the cell membrane. It is found in the postsynaptic density. The protein localises to the perikaryon. It localises to the cell projection. The protein resides in the dendrite. Probable cell surface receptor that regulates oligodendroglial precursor cell migration. Might also regulate differentiation of oligodendroglial precursor cells. Has growth cone collapse activity against retinal ganglion-cell axons. The protein is Semaphorin-4F (Sema4f) of Mus musculus (Mouse).